A 158-amino-acid chain; its full sequence is Urease accessory protein UreE (158 aa).

Belongs to the UreE family.

The protein localises to the cytoplasm. In terms of biological role, involved in urease metallocenter assembly. Binds nickel. Probably functions as a nickel donor during metallocenter assembly. The sequence is that of Urease accessory protein UreE from Klebsiella pneumoniae (strain 342).